A 370-amino-acid polypeptide reads, in one-letter code: Calcium/calmodulin-dependent protein kinase type 1 (370 aa).

The 257-residue stretch at 20–276 (YDFRDVLGTG…CEQALQHPWI (257 aa)) folds into the Protein kinase domain. ATP-binding positions include 26–34 (LGTGAFSEV) and Lys-49. A Glycyl lysine isopeptide (Lys-Gly) (interchain with G-Cter in ubiquitin) cross-link involves residue Lys-59. Asp-141 functions as the Proton acceptor in the catalytic mechanism. A Phosphothreonine; by CaMKK1 and CaMKK2 modification is found at Thr-177. Residues 276 to 316 (IAGDTALDKNIHQSVSEQIKKNFAKSKWKQAFNATAVVRHM) are autoinhibitory domain. Residues 296-317 (KNFAKSKWKQAFNATAVVRHMR) form a calmodulin-binding region. A Nuclear export signal motif is present at residues 315-321 (HMRKLQL). The residue at position 363 (Ser-363) is a Phosphoserine.

The protein belongs to the protein kinase superfamily. CAMK Ser/Thr protein kinase family. CaMK subfamily. In terms of assembly, monomer. Interacts with XPO1. Interacts with MARK2, ARHGEF7/BETAPIX and GIT1. Post-translationally, phosphorylated by CaMKK1 and CaMKK2 on Thr-177. In terms of processing, polybiquitinated by the E3 ubiquitin-protein ligase complex SCF(FBXL12), leading to proteasomal degradation. In terms of tissue distribution, widely expressed. Expressed in cells of the zona glomerulosa of the adrenal cortex.

The protein localises to the cytoplasm. Its subcellular location is the nucleus. It catalyses the reaction L-seryl-[protein] + ATP = O-phospho-L-seryl-[protein] + ADP + H(+). The catalysed reaction is L-threonyl-[protein] + ATP = O-phospho-L-threonyl-[protein] + ADP + H(+). With respect to regulation, activated by Ca(2+)/calmodulin. Binding of calmodulin results in conformational change that relieves intrasteric autoinhibition and allows phosphorylation of Thr-177 within the activation loop by CaMKK1 or CaMKK2. Phosphorylation of Thr-177 results in several fold increase in total activity. Unlike CaMK4, is unable to exhibit autonomous activity after Ca(2+)/calmodulin activation. Its function is as follows. Calcium/calmodulin-dependent protein kinase that operates in the calcium-triggered CaMKK-CaMK1 signaling cascade and, upon calcium influx, regulates transcription activators activity, cell cycle, hormone production, cell differentiation, actin filament organization and neurite outgrowth. Recognizes the substrate consensus sequence [MVLIF]-x-R-x(2)-[ST]-x(3)-[MVLIF]. Regulates axonal extension and growth cone motility in hippocampal and cerebellar nerve cells. Upon NMDA receptor-mediated Ca(2+) elevation, promotes dendritic growth in hippocampal neurons and is essential in synapses for full long-term potentiation (LTP) and ERK2-dependent translational activation. Downstream of NMDA receptors, promotes the formation of spines and synapses in hippocampal neurons by phosphorylating ARHGEF7/BETAPIX on 'Ser-694', which results in the enhancement of ARHGEF7 activity and activation of RAC1. Promotes neuronal differentiation and neurite outgrowth by activation and phosphorylation of MARK2 on 'Ser-91', 'Ser-92', 'Ser-93' and 'Ser-294'. Promotes nuclear export of HDAC5 and binding to 14-3-3 by phosphorylation of 'Ser-259' and 'Ser-498' in the regulation of muscle cell differentiation. Regulates NUMB-mediated endocytosis by phosphorylation of NUMB on 'Ser-276' and 'Ser-295'. Involved in the regulation of basal and estrogen-stimulated migration of medulloblastoma cells through ARHGEF7/BETAPIX phosphorylation. Is required for proper activation of cyclin-D1/CDK4 complex during G1 progression in diploid fibroblasts. Plays a role in K(+) and ANG2-mediated regulation of the aldosterone synthase (CYP11B2) to produce aldosterone in the adrenal cortex. Phosphorylates EIF4G3/eIF4GII. In vitro phosphorylates CREB1, ATF1, CFTR, MYL9 and SYN1/synapsin I. This is Calcium/calmodulin-dependent protein kinase type 1 (CAMK1) from Homo sapiens (Human).